Consider the following 1247-residue polypeptide: uncharacterized protein (1247 aa).

Disordered stretches follow at residues 25 to 141 (KYNN…HSPP), 169 to 431 (AANN…QQPQ), 472 to 667 (QQQP…PSSS), 738 to 770 (NSNSFNNGDNNNNNNNNNNNNHHNNDIDDSEPI), 807 to 857 (YSNR…QNIE), 869 to 1087 (GKNF…NNNN), 1099 to 1122 (STLNNSQDDSYQQEQEQQEQESQQ), and 1139 to 1162 (QQQQQQQNYSSTPPNITPHLKGDG). Residues 26–125 (YNNSNNYNNN…SNNSINSNSY (100 aa)) are compositionally biased toward low complexity. Positions 126 to 139 (KVNTPTQNGKSSHS) are enriched in polar residues. Composition is skewed to low complexity over residues 169-178 (AANNGSSNSS), 185-223 (SNSNTMNNNNNNNNNNNNNSNSSNNNNNGNNNNNNNYNS), and 230-341 (NNNN…YSNS). Residues 342–356 (KYNQQKSYNNAPHQL) show a composition bias toward polar residues. 4 stretches are compositionally biased toward low complexity: residues 363-375 (NSYYNKNNYNNGN), 385-394 (GSGNSSNSNG), 409-431 (QSQSQQQPQQQQQQQPQQPQQPQ), and 472-484 (QQQPPQQQQQQQQ). Residues 511-522 (GLNNSLNGQTDL) show a composition bias toward polar residues. 6 stretches are compositionally biased toward low complexity: residues 523–544 (NNSNYNSNSNNNNTNNNNTNNN), 553–628 (YNYN…VGSN), 655–667 (TPSSSTTTSPSSS), 738–759 (NSNSFNNGDNNNNNNNNNNNNH), 807–855 (YSNR…DSQN), and 871–928 (NFNN…ENNN). The segment covering 929-942 (GDVFSNGFSTWTPK) has biased composition (polar residues). The segment covering 943–983 (SGSNSLNNSQNNLSNGQNSSNNSQNNLNNSQNSLNSSGNHH) has biased composition (low complexity). Over residues 984 to 995 (SNYHGHNNHHHY) the composition is skewed to basic residues. The span at 996–1021 (NNNNNNNNNNNNNNNNNNNNNNNGNG) shows a compositional bias: low complexity. Over residues 1026–1044 (YYNNKYQQKSPQHQSSNSV) the composition is skewed to polar residues. Residues 1047–1060 (IPPPGFSTIAPPPG) show a composition bias toward pro residues. The span at 1064–1087 (NNNNNNNNNNNNNNNKNNNSNNNN) shows a compositional bias: low complexity. The segment covering 1099-1108 (STLNNSQDDS) has biased composition (polar residues). Residues 1110-1122 (QQEQEQQEQESQQ) show a composition bias toward low complexity.

This is an uncharacterized protein from Dictyostelium discoideum (Social amoeba).